The following is a 159-amino-acid chain: Thioredoxin O2, mitochondrial (159 aa).

At serine 40 the chain carries Phosphoserine. One can recognise a Thioredoxin domain in the interval 43 to 159 (FAEGDRSSFV…LKSVMEQLYK (117 aa)). Active-site nucleophile residues include cysteine 83 and cysteine 86. An intrachain disulfide couples cysteine 83 to cysteine 86.

The protein belongs to the thioredoxin family. Plant O-type subfamily.

It is found in the mitochondrion. Functionally, thiol-disulfide oxidoreductase that may participate in various redox reactions. Possesses insulin disulfide bonds reducing activity. Reduced by thioredoxin reductases NTRA and NTRB. This is Thioredoxin O2, mitochondrial from Arabidopsis thaliana (Mouse-ear cress).